A 345-amino-acid chain; its full sequence is Heat-inducible transcription repressor HrcA (345 aa).

It belongs to the HrcA family.

In terms of biological role, negative regulator of class I heat shock genes (grpE-dnaK-dnaJ and groELS operons). Prevents heat-shock induction of these operons. The protein is Heat-inducible transcription repressor HrcA of Tetragenococcus halophilus (Pediococcus halophilus).